The primary structure comprises 67 residues: Small ribosomal subunit protein eS27 (67 aa).

The Zn(2+) site is built by Cys-22, Cys-25, Cys-41, and Cys-44. The C4-type zinc-finger motif lies at 22–44 (CPDCGNEQVTFSHAAMVVRCLVC).

This sequence belongs to the eukaryotic ribosomal protein eS27 family. Part of the 30S ribosomal subunit. Requires Zn(2+) as cofactor.

This chain is Small ribosomal subunit protein eS27, found in Pyrobaculum neutrophilum (strain DSM 2338 / JCM 9278 / NBRC 100436 / V24Sta) (Thermoproteus neutrophilus).